A 194-amino-acid chain; its full sequence is Serine/threonine-protein kinase mos (194 aa).

In terms of domain architecture, Protein kinase spans Leu47–Phe194. ATP is bound by residues Leu53 to Val61 and Lys74. Asp187 functions as the Proton acceptor in the catalytic mechanism.

This sequence belongs to the protein kinase superfamily. Ser/Thr protein kinase family.

It carries out the reaction L-seryl-[protein] + ATP = O-phospho-L-seryl-[protein] + ADP + H(+). It catalyses the reaction L-threonyl-[protein] + ATP = O-phospho-L-threonyl-[protein] + ADP + H(+). The protein is Serine/threonine-protein kinase mos (MOS) of Dendroaspis angusticeps (Eastern green mamba).